The chain runs to 283 residues: Elongation factor Ts (283 aa).

The segment at 80-83 is involved in Mg(2+) ion dislocation from EF-Tu; that stretch reads TDFV.

The protein belongs to the EF-Ts family.

It localises to the cytoplasm. In terms of biological role, associates with the EF-Tu.GDP complex and induces the exchange of GDP to GTP. It remains bound to the aminoacyl-tRNA.EF-Tu.GTP complex up to the GTP hydrolysis stage on the ribosome. The sequence is that of Elongation factor Ts from Salmonella choleraesuis (strain SC-B67).